The sequence spans 257 residues: tRNA (guanine-N(1)-)-methyltransferase (257 aa).

Residues G117 and 137 to 142 (LGDFVL) contribute to the S-adenosyl-L-methionine site.

The protein belongs to the RNA methyltransferase TrmD family. In terms of assembly, homodimer.

It localises to the cytoplasm. It carries out the reaction guanosine(37) in tRNA + S-adenosyl-L-methionine = N(1)-methylguanosine(37) in tRNA + S-adenosyl-L-homocysteine + H(+). Specifically methylates guanosine-37 in various tRNAs. This is tRNA (guanine-N(1)-)-methyltransferase from Bordetella parapertussis (strain 12822 / ATCC BAA-587 / NCTC 13253).